We begin with the raw amino-acid sequence, 27 residues long: Omega-conotoxin RVIA (27 aa).

3 disulfides stabilise this stretch: C1–C16, C8–C19, and C15–C26. Residues P4 and P7 each carry the 4-hydroxyproline modification.

The protein belongs to the conotoxin O1 superfamily. As to expression, expressed by the venom duct.

It is found in the secreted. Functionally, omega-conotoxins act at presynaptic membranes, they bind and block voltage-gated calcium channels (Cav). In Conus radiatus (Rayed cone), this protein is Omega-conotoxin RVIA.